Reading from the N-terminus, the 872-residue chain is MAEMEKEGRPPENKRSRKPAHPVKREINEEMKNFAENTMNELLGWYGYDKVELKDGEDIEFRSYPTDGESRQHISVLKENSLPKPKLPEDSVISPYNISTGYSGLATGNGLSDSPAGSKDHGNVPIIVPLIPPPFIKPPAEDDVSNVQIMCAWCQKVGIKRYSLSMGSEVKSFCSEKCFAACRRAYFKRNKARDEDGHAENFPQQHYAKETPRLAFKNNCELLVCDWCKHIRHTKEYLDFGDGERRLQFCSAKCLNQYKMDIFYKETQANLPAGLCSTLHPPMENKTEGTGVQLLTPDSWNIPLTDARRKAPSPVAAAGQSQGPGPSASTTVSPSDTANCSVTKIPTPVPKSMPISETPNIPPVSVQPPASIGPPLGVPPRSPPMVMTNRGPVPLPIFMEQQIMQQLRPPFIRGPPHHASNPNSPLSNPMLPGIGPPPGGPRNLGPTSSPMHRPLLSPHIHPPSTPTMPGNPPGLLPPPPPGAPLPSLPFPPVSMMPNGPMPVPQMMNFGLPSLAPLVPPPTLLVPYPVIVPLPVPIPIPIPVPHVSDSKPPNGFSSNGENFIPSAPGDSSAAGGKPGGHSLSPRDSKQGSSKSADSPPGCSGQALSLAPAPAEHGRSEVVDLTRRAGSPPGAGGQLGFPGGVLQGPQDGVIDLTVGHRARLHNVIHRALHAHVKAEREPGAAERRTCGGCRDGHCSPPAAGDPGPGAPAGPEAAAACNVIVNGTRGAAEGAKGAEPPPEQPPPPPPPPPAPPKKLLSPEEPAVSELESVKENNCASNCHLDGEAAKKLMGEEALAGGDKSDPNLNNPADEDHAYALRMLPKTGCVIQPVPKPAEKAAMAPCIISSPMLSAGPEDLEPPLKRRCLRIRNQNK.

Positions 1–14 (MAEMEKEGRPPENK) are enriched in basic and acidic residues. The disordered stretch occupies residues 1-26 (MAEMEKEGRPPENKRSRKPAHPVKRE). 2 FCS-type zinc fingers span residues 142–180 (DDVSNVQIMCAWCQKVGIKRYSLSMGSEVKSFCSEKCFA) and 216–256 (FKNN…KCLN). 3 disordered regions span residues 308 to 354 (RRKA…KSMP), 411 to 484 (FIRG…PGAP), and 550 to 619 (KPPN…GRSE). The segment covering 319 to 344 (GQSQGPGPSASTTVSPSDTANCSVTK) has biased composition (polar residues). Low complexity predominate over residues 417-433 (HHASNPNSPLSNPMLPG). Over residues 460 to 484 (IHPPSTPTMPGNPPGLLPPPPPGAP) the composition is skewed to pro residues. An SUMO interaction motif 1 (SIM); mediates the binding to polysumoylated substrates motif is present at residues 620-624 (VVDLT). Position 629 is a phosphoserine (S629). An SUMO interaction motif 2 (SIM); mediates the binding to polysumoylated substrates motif is present at residues 651–655 (VIDLT). Residue K675 forms a Glycyl lysine isopeptide (Lys-Gly) (interchain with G-Cter in SUMO2) linkage. S697 carries the post-translational modification Phosphoserine. The segment at 728–770 (AAEGAKGAEPPPEQPPPPPPPPPAPPKKLLSPEEPAVSELESV) is disordered. Residues 736–753 (EPPPEQPPPPPPPPPAPP) are compositionally biased toward pro residues.

It belongs to the SOBP family. In terms of assembly, interacts (via SIM domains) with SUMO1 and SUMO2.

Functionally, implicated in development of the cochlea. The protein is Sine oculis-binding protein homolog of Bos taurus (Bovine).